Consider the following 202-residue polypeptide: IMP cyclohydrolase (202 aa).

This sequence belongs to the archaeal IMP cyclohydrolase family.

It catalyses the reaction IMP + H2O = 5-formamido-1-(5-phospho-D-ribosyl)imidazole-4-carboxamide. It functions in the pathway purine metabolism; IMP biosynthesis via de novo pathway; IMP from 5-formamido-1-(5-phospho-D-ribosyl)imidazole-4-carboxamide: step 1/1. Functionally, catalyzes the cyclization of 5-formylamidoimidazole-4-carboxamide ribonucleotide to IMP. The protein is IMP cyclohydrolase of Methanothermobacter thermautotrophicus (strain ATCC 29096 / DSM 1053 / JCM 10044 / NBRC 100330 / Delta H) (Methanobacterium thermoautotrophicum).